The sequence spans 248 residues: 2,3-bisphosphoglycerate-dependent phosphoglycerate mutase (248 aa).

Residues 8–15, 21–22, arginine 60, 87–90, lysine 98, 114–115, and 183–184 each bind substrate; these read RHGESQWN, TG, ERHY, RR, and GN. Histidine 9 (tele-phosphohistidine intermediate) is an active-site residue. Glutamate 87 acts as the Proton donor/acceptor in catalysis.

This sequence belongs to the phosphoglycerate mutase family. BPG-dependent PGAM subfamily. In terms of assembly, homodimer.

The catalysed reaction is (2R)-2-phosphoglycerate = (2R)-3-phosphoglycerate. The protein operates within carbohydrate degradation; glycolysis; pyruvate from D-glyceraldehyde 3-phosphate: step 3/5. Functionally, catalyzes the interconversion of 2-phosphoglycerate and 3-phosphoglycerate. The sequence is that of 2,3-bisphosphoglycerate-dependent phosphoglycerate mutase from Teredinibacter turnerae (strain ATCC 39867 / T7901).